We begin with the raw amino-acid sequence, 175 residues long: Co-chaperone protein daf-41 (175 aa).

Residues 2–89 enclose the CS domain; sequence AKQPTVLWAQ…KTPAWWPRLL (88 aa). The tract at residues 109 to 175 is disordered; sequence DEDDEAEDAG…EEEGKNGTRA (67 aa). Over residues 148–168 the composition is skewed to acidic residues; the sequence is GLEDDEEDDDMPDLEDNEEEE.

The protein belongs to the p23/wos2 family. Expressed in anterior and posterior neurons including ASE, AWC, ASI and ADL amphids and phasmid sensory neurons, peripheral neurons and ventral cord motorneurons. Additionally expressed in body wall muscle, pharynx, vulva, germ cells and intestine.

In terms of biological role, co-chaperone for hsp90/daf-21. Involved in regulation of longevity, larval entry and exit from the dauer stage of development and response to environmental cues, such as oxidative stress, in a temperature-dependent manner. Role in daf-16 and hsf-1 inhibition at elevated temperatures. The sequence is that of Co-chaperone protein daf-41 from Caenorhabditis elegans.